Reading from the N-terminus, the 386-residue chain is NADPH-dependent alkenal/one oxidoreductase, chloroplastic (386 aa).

It belongs to the zinc-containing alcohol dehydrogenase family. Quinone oxidoreductase subfamily.

It is found in the plastid. Its subcellular location is the chloroplast. Its function is as follows. Reduces the double bond in short-chain unsaturated carbonyls. Acts preferentially on alpha,beta-unsaturated ketones rather on alpha,beta-unsaturated aldehydes. Has no activity with (E)-2-hexenal and (E)-2-pentenal. Contributes to detoxify stromal reactive carbonyls produced under oxidative stress. The sequence is that of NADPH-dependent alkenal/one oxidoreductase, chloroplastic from Arabidopsis thaliana (Mouse-ear cress).